Reading from the N-terminus, the 880-residue chain is Phosphoinositide 3-kinase regulatory subunit 5 (880 aa).

Residue Met-1 is modified to N-acetylmethionine. Residues 25–101 (SLSRRSTSWS…TPHFPPDSDL (77 aa)) form a heterodimerization region. 4 disordered regions span residues 315-339 (GILGDDEEEEEEEEEVEEDLETDGH), 389-416 (SGYVEDSEESSSEWPWRRGSQERRGHRR), 454-510 (RRAG…SGDE), and 565-601 (HGTSPGACPPPRSQTPSPPTDSPRHASPGELGTTPWE). A compositionally biased stretch (acidic residues) spans 318–335 (GDDEEEEEEEEEVEEDLE). Ser-458 and Ser-507 each carry phosphoserine. Over residues 571–585 (ACPPPRSQTPSPPTD) the composition is skewed to pro residues. The interaction with beta-gamma G protein dimers stretch occupies residues 653 to 753 (PILADMLLYY…WSNLEKVCTS (101 aa)).

In terms of assembly, heterodimer of a catalytic subunit (PIK3CG/p120) and a regulatory (PIK3R5a/p101) subunit. Interacts with beta-gamma G protein dimers. As to expression, ubiquitously expressed with high expression in fetal brain compared to adult brain. Abundant expression is observed in cerebellum, cerebral cortex, cerebral meninges, and vermis cerebelli.

The protein localises to the nucleus. Its subcellular location is the cytoplasm. It localises to the cell membrane. Its activity is regulated as follows. Greatly activated by G gamma proteins. Regulatory subunit of the PI3K gamma complex. Required for recruitment of the catalytic subunit to the plasma membrane via interaction with beta-gamma G protein dimers. Required for G protein-mediated activation of PIK3CG. The protein is Phosphoinositide 3-kinase regulatory subunit 5 (PIK3R5) of Homo sapiens (Human).